The chain runs to 236 residues: Peptidyl-prolyl cis-trans isomerase CYP21-4 (236 aa).

A helical; Signal-anchor for type II membrane protein transmembrane segment spans residues 22–42; it reads ISISTIIVCNLVVAVVILSLV. The tract at residues 52-71 is disordered; the sequence is SRNTIEHETRSQRFEDTNTA. A compositionally biased stretch (basic and acidic residues) spans 54–67; that stretch reads NTIEHETRSQRFED. Residues 82 to 232 form the PPIase cyclophilin-type domain; the sequence is FADINTSKGL…SPIGITGVVL (151 aa). N86 carries N-linked (GlcNAc...) asparagine glycosylation.

The protein belongs to the cyclophilin-type PPIase family. As to expression, ubiquitous.

It localises to the membrane. The enzyme catalyses [protein]-peptidylproline (omega=180) = [protein]-peptidylproline (omega=0). Functionally, PPIases accelerate the folding of proteins. It catalyzes the cis-trans isomerization of proline imidic peptide bonds in oligopeptides. This Arabidopsis thaliana (Mouse-ear cress) protein is Peptidyl-prolyl cis-trans isomerase CYP21-4 (CYP21-4).